The sequence spans 547 residues: Chaperonin GroEL (547 aa).

Residues 30–33 (TLGP), Lys51, 87–91 (DGTTT), Gly415, and Asp495 each bind ATP.

The protein belongs to the chaperonin (HSP60) family. Forms a cylinder of 14 subunits composed of two heptameric rings stacked back-to-back. Interacts with the co-chaperonin GroES.

The protein localises to the cytoplasm. The enzyme catalyses ATP + H2O + a folded polypeptide = ADP + phosphate + an unfolded polypeptide.. Its function is as follows. Together with its co-chaperonin GroES, plays an essential role in assisting protein folding. The GroEL-GroES system forms a nano-cage that allows encapsulation of the non-native substrate proteins and provides a physical environment optimized to promote and accelerate protein folding. In Ralstonia nicotianae (strain ATCC BAA-1114 / GMI1000) (Ralstonia solanacearum), this protein is Chaperonin GroEL.